The sequence spans 337 residues: 5-dehydro-2-deoxygluconokinase (337 aa).

Belongs to the carbohydrate kinase PfkB family.

It catalyses the reaction 5-dehydro-2-deoxy-D-gluconate + ATP = 6-phospho-5-dehydro-2-deoxy-D-gluconate + ADP + H(+). It participates in polyol metabolism; myo-inositol degradation into acetyl-CoA; acetyl-CoA from myo-inositol: step 5/7. Functionally, catalyzes the phosphorylation of 5-dehydro-2-deoxy-D-gluconate (2-deoxy-5-keto-D-gluconate or DKG) to 6-phospho-5-dehydro-2-deoxy-D-gluconate (DKGP). The protein is 5-dehydro-2-deoxygluconokinase of Geobacillus thermodenitrificans (strain NG80-2).